The primary structure comprises 156 residues: Ribosomal RNA large subunit methyltransferase H (156 aa).

Residues Leu73, Gly104, and 123–128 (ISSMTL) contribute to the S-adenosyl-L-methionine site.

The protein belongs to the RNA methyltransferase RlmH family. Homodimer.

Its subcellular location is the cytoplasm. It carries out the reaction pseudouridine(1915) in 23S rRNA + S-adenosyl-L-methionine = N(3)-methylpseudouridine(1915) in 23S rRNA + S-adenosyl-L-homocysteine + H(+). Specifically methylates the pseudouridine at position 1915 (m3Psi1915) in 23S rRNA. This Janthinobacterium sp. (strain Marseille) (Minibacterium massiliensis) protein is Ribosomal RNA large subunit methyltransferase H.